A 365-amino-acid chain; its full sequence is Geranylgeranyl pyrophosphate synthase (365 aa).

Residues 1–11 (MKPLPSTNGKV) are compositionally biased toward polar residues. The segment at 1-36 (MKPLPSTNGKVNGNGKHHDSSLSSTSSTSSSSSSDT) is disordered. Residues 21-34 (SLSSTSSTSSSSSS) show a composition bias toward low complexity. Isopentenyl diphosphate-binding residues include K78, R81, and H110. D117 and D121 together coordinate Mg(2+). R126 provides a ligand contact to dimethylallyl diphosphate. R127 lines the isopentenyl diphosphate pocket. K211, T212, and Q247 together coordinate dimethylallyl diphosphate. D250 serves as a coordination point for Mg(2+). Dimethylallyl diphosphate-binding residues include N254, K263, and K273.

This sequence belongs to the FPP/GGPP synthase family. Mg(2+) serves as cofactor.

The catalysed reaction is isopentenyl diphosphate + dimethylallyl diphosphate = (2E)-geranyl diphosphate + diphosphate. The enzyme catalyses isopentenyl diphosphate + (2E)-geranyl diphosphate = (2E,6E)-farnesyl diphosphate + diphosphate. It catalyses the reaction isopentenyl diphosphate + (2E,6E)-farnesyl diphosphate = (2E,6E,10E)-geranylgeranyl diphosphate + diphosphate. In terms of biological role, geranylgeranyl pyrophosphate synthase that catalyzes the trans-addition of the three molecules of IPP onto DMAPP to form geranylgeranyl pyrophosphate. Does not show any monoterpene nor sesquiterpene synthase activity. This Melampsora lini (Rust fungus) protein is Geranylgeranyl pyrophosphate synthase.